Here is a 3133-residue protein sequence, read N- to C-terminus: Probable polyketide synthase 38 (3133 aa).

One can recognise a Ketosynthase family 3 (KS3) domain in the interval 9-440 (DDDVAVIGIG…GSNVCLILSE (432 aa)). Residues Cys-181, His-320, and His-363 each act as for beta-ketoacyl synthase activity in the active site. The interval 647–680 (GVSADIIIGHSLGEISSAYCSGMIDFQTLCYLTY) is acyl/malonyl transferase. Ser-657 acts as the For acyl/malonyl transferase activity in catalysis. The tract at residues 945–1067 (GPSIHSLGNN…GNFSLSKHNI (123 aa)) is N-terminal hotdog fold. Positions 945-1248 (GPSIHSLGNN…CTIVASNPDS (304 aa)) constitute a PKS/mFAS DH domain. Catalysis depends on His-979, which acts as the Proton acceptor; for dehydratase activity. Residues 1083 to 1248 (NFTCISKQDL…CTIVASNPDS (166 aa)) form a C-terminal hotdog fold region. Asp-1155 acts as the Proton donor; for dehydratase activity in catalysis. The disordered stretch occupies residues 1370–1408 (NNNNNNNNNNNNNNNNNNNNNNNNNNNNNNNNNDNDNDN). Residues 2562–2639 (NNNEIIRSTI…QSIEIIKSAH (78 aa)) form the Carrier domain. Residue Ser-2599 is modified to O-(pantetheine 4'-phosphoryl)serine. Residues 2649–2711 (NNNNSNHHDN…NNNNNNNNNN (63 aa)) adopt a coiled-coil conformation. Disordered stretches follow at residues 2691 to 2715 (LNNN…NNNN) and 2794 to 2817 (GNIS…NNNQ). 2 stretches are compositionally biased toward low complexity: residues 2692–2715 (NNNN…NNNN) and 2795–2817 (NISN…NNNQ).

The cofactor is pantetheine 4'-phosphate.

Functionally, probable polyketide synthase. The chain is Probable polyketide synthase 38 (pks38) from Dictyostelium discoideum (Social amoeba).